The sequence spans 187 residues: Flavin-dependent monooxygenase, reductase subunit HsaB (187 aa).

FAD is bound by residues 32 to 36, 38 to 39, 53 to 55, 59 to 60, and 85 to 86; these read PVGFA, QS, CPT, RS, and RF. 152-155 contacts NAD(+); that stretch reads FYRG.

This sequence belongs to the non-flavoprotein flavin reductase family. HsaAB monooxygenase consists of an oxygenase component HsaA and a reductase component HsaB.

It catalyses the reaction a reduced flavin + NAD(+) = an oxidized flavin + NADH + 2 H(+). It participates in lipid metabolism; steroid biosynthesis. In terms of biological role, catalyzes the reduction of free flavins (FMN or FAD) by NADH. Subsequently, the reduced flavins diffuse to the HsaA oxygenase subunit. The sequence is that of Flavin-dependent monooxygenase, reductase subunit HsaB (hsaB) from Mycobacterium tuberculosis (strain CDC 1551 / Oshkosh).